Reading from the N-terminus, the 312-residue chain is Dihydroorotate dehydrogenase B (NAD(+)), catalytic subunit (312 aa).

FMN is bound by residues Ser-23 and Lys-47 to Ala-48. Substrate contacts are provided by residues Lys-47 and Asn-71–Leu-75. FMN contacts are provided by Asn-102 and Asn-130. Asn-130 contacts substrate. Cys-133 (nucleophile) is an active-site residue. Residues Lys-168 and Ile-194 each coordinate FMN. Asn-195–Thr-196 contacts substrate. Residues Gly-220, Gly-246–Gly-247, and Gly-268–Thr-269 contribute to the FMN site.

It belongs to the dihydroorotate dehydrogenase family. Type 1 subfamily. As to quaternary structure, heterotetramer of 2 PyrK and 2 PyrD type B subunits. Requires FMN as cofactor.

It localises to the cytoplasm. The enzyme catalyses (S)-dihydroorotate + NAD(+) = orotate + NADH + H(+). The protein operates within pyrimidine metabolism; UMP biosynthesis via de novo pathway; orotate from (S)-dihydroorotate (NAD(+) route): step 1/1. Its function is as follows. Catalyzes the conversion of dihydroorotate to orotate with NAD(+) as electron acceptor. The polypeptide is Dihydroorotate dehydrogenase B (NAD(+)), catalytic subunit (pyrDB) (Enterococcus faecalis (strain ATCC 47077 / OG1RF)).